Reading from the N-terminus, the 467-residue chain is F-box only protein 6 (467 aa).

The F-box domain maps to 114 to 163 (QEIWQEFPQDLFEDVVSRLPMATFFQFRAVCRKWNALIDSDSFSRCFTEL). Kelch repeat units follow at residues 163-211 (LPQT…MASA), 252-305 (GMTL…NFKS), and 406-456 (CLGN…IACG).

The sequence is that of F-box only protein 6 (FBX6) from Arabidopsis thaliana (Mouse-ear cress).